Consider the following 363-residue polypeptide: DNA replication and repair protein RecF (363 aa).

Position 30–37 (30–37 (GNNAQGKT)) interacts with ATP.

The protein belongs to the RecF family.

It is found in the cytoplasm. The RecF protein is involved in DNA metabolism; it is required for DNA replication and normal SOS inducibility. RecF binds preferentially to single-stranded, linear DNA. It also seems to bind ATP. The polypeptide is DNA replication and repair protein RecF (Clostridium acetobutylicum (strain ATCC 824 / DSM 792 / JCM 1419 / IAM 19013 / LMG 5710 / NBRC 13948 / NRRL B-527 / VKM B-1787 / 2291 / W)).